Consider the following 382-residue polypeptide: D-galactonate dehydratase (382 aa).

D183 contributes to the Mg(2+) binding site. H185 serves as the catalytic Proton donor. Mg(2+) contacts are provided by E209 and E235. Catalysis depends on H285, which acts as the Proton acceptor.

It belongs to the mandelate racemase/muconate lactonizing enzyme family. GalD subfamily. Mg(2+) serves as cofactor.

The enzyme catalyses D-galactonate = 2-dehydro-3-deoxy-D-galactonate + H2O. Its pathway is carbohydrate acid metabolism; D-galactonate degradation; D-glyceraldehyde 3-phosphate and pyruvate from D-galactonate: step 1/3. Its function is as follows. Catalyzes the dehydration of D-galactonate to 2-keto-3-deoxy-D-galactonate. This chain is D-galactonate dehydratase, found in Escherichia coli O45:K1 (strain S88 / ExPEC).